Reading from the N-terminus, the 596-residue chain is Glomulin (596 aa).

A2 is modified (N-acetylalanine). The interval 2–555 (AVEELQSIIK…EEIPSMPPEM (554 aa)) is alpha-helical region with structural similarity to HEAT repeats. An important for interaction with RBX1 region spans residues 299 to 596 (IDQLPMVLSP…STSEENVGIK (298 aa)).

As to quaternary structure, interacts with FKBP4 and FKBP1A. Interacts with RBX1 (via RING domain). Identified in complexes that contain RBX1 plus one of the cullins CUL1, CUL2, CUL3, and CUL4A. Identified in a SCF complex composed of CUL1, RBX1, SKP1, FBXW7 and GLMN. Component of a SCF-like complex consisting of CUL7, RBX1, SKP1, FBXW8 and GLMN. Interacts with unphosphorylated MET and is released upon MET phosphorylation. Post-translationally, phosphorylated on tyrosine residues. In terms of tissue distribution, ubiquitous. Detected in embryonic vasculature and embryonic perichondrium, and in adult eye, brain, heart, testis, kidney, smooth muscle and skeletal muscle.

Its function is as follows. Regulatory component of cullin-RING-based SCF (SKP1-Cullin-F-box protein) E3 ubiquitin-protein ligase complexes. Inhibits E3 ubiquitin ligase activity by binding to the RING domain of RBX1 and inhibiting its interaction with the E2 ubiquitin-conjugating enzyme CDC34. Inhibits RBX1-mediated neddylation of CUL1. Required for normal stability and normal cellular levels of key components of SCF ubiquitin ligase complexes, including FBXW7, RBX1, CUL1, CUL2, CUL3, CUL4A, and thereby contributes to the regulation of CCNE1 and MYC levels. Essential for normal development of the vasculature. Contributes to the regulation of RPS6KB1 phosphorylation. The polypeptide is Glomulin (Glmn) (Mus musculus (Mouse)).